The following is a 157-amino-acid chain: uncharacterized protein (157 aa).

Belongs to the MG067/MG068/MG395 family.

This is an uncharacterized protein from Mycoplasma pneumoniae (strain ATCC 29342 / M129 / Subtype 1) (Mycoplasmoides pneumoniae).